A 73-amino-acid chain; its full sequence is Putative membrane protein insertion efficiency factor (73 aa).

Belongs to the UPF0161 family.

The protein resides in the cell inner membrane. In terms of biological role, could be involved in insertion of integral membrane proteins into the membrane. The sequence is that of Putative membrane protein insertion efficiency factor from Treponema denticola (strain ATCC 35405 / DSM 14222 / CIP 103919 / JCM 8153 / KCTC 15104).